The chain runs to 387 residues: Xylose isomerase (387 aa).

Residues histidine 54 and aspartate 57 contribute to the active site. Positions 181, 217, 220, 245, 255, 257, and 287 each coordinate Mg(2+).

It belongs to the xylose isomerase family. As to quaternary structure, homotetramer. The cofactor is Mg(2+).

The protein resides in the cytoplasm. It carries out the reaction alpha-D-xylose = alpha-D-xylulofuranose. In Streptomyces coelicolor (strain ATCC BAA-471 / A3(2) / M145), this protein is Xylose isomerase.